The chain runs to 139 residues: MAKQAAKGSAAATKRQRGKRREKKNVPRGQAHIQSTFNNTIVTITDPAGNVICWSSAGQNGFKGSRKSTPYAAQVAAENAARKAMENGMRQVEVFVKGPGAGREAAIRSLQAAGLQVTAITDVTPIPHNGCRPPKRRRV.

The span at M1–T13 shows a compositional bias: low complexity. The disordered stretch occupies residues M1–Q30. Over residues K14–K23 the composition is skewed to basic residues.

Belongs to the universal ribosomal protein uS11 family. As to quaternary structure, part of the 30S ribosomal subunit. Interacts with proteins S7 and S18. Binds to IF-3.

Its function is as follows. Located on the platform of the 30S subunit, it bridges several disparate RNA helices of the 16S rRNA. Forms part of the Shine-Dalgarno cleft in the 70S ribosome. This chain is Small ribosomal subunit protein uS11, found in Roseiflexus sp. (strain RS-1).